The chain runs to 480 residues: Protein nucleotidyltransferase YdiU (480 aa).

ATP contacts are provided by Gly86, Gly88, Arg89, Lys109, Asp121, Gly122, Arg172, and Arg179. Asp248 functions as the Proton acceptor in the catalytic mechanism. Asn249 and Asp258 together coordinate Mg(2+). Position 258 (Asp258) interacts with ATP.

It belongs to the SELO family. Requires Mg(2+) as cofactor. It depends on Mn(2+) as a cofactor.

The enzyme catalyses L-seryl-[protein] + ATP = 3-O-(5'-adenylyl)-L-seryl-[protein] + diphosphate. The catalysed reaction is L-threonyl-[protein] + ATP = 3-O-(5'-adenylyl)-L-threonyl-[protein] + diphosphate. It catalyses the reaction L-tyrosyl-[protein] + ATP = O-(5'-adenylyl)-L-tyrosyl-[protein] + diphosphate. It carries out the reaction L-histidyl-[protein] + UTP = N(tele)-(5'-uridylyl)-L-histidyl-[protein] + diphosphate. The enzyme catalyses L-seryl-[protein] + UTP = O-(5'-uridylyl)-L-seryl-[protein] + diphosphate. The catalysed reaction is L-tyrosyl-[protein] + UTP = O-(5'-uridylyl)-L-tyrosyl-[protein] + diphosphate. Nucleotidyltransferase involved in the post-translational modification of proteins. It can catalyze the addition of adenosine monophosphate (AMP) or uridine monophosphate (UMP) to a protein, resulting in modifications known as AMPylation and UMPylation. The protein is Protein nucleotidyltransferase YdiU of Enterobacter sp. (strain 638).